Here is a 276-residue protein sequence, read N- to C-terminus: NH(3)-dependent NAD(+) synthetase (276 aa).

51–58 (GISGGVDS) contacts ATP. Residue aspartate 57 participates in Mg(2+) binding. Residue arginine 148 participates in deamido-NAD(+) binding. Threonine 168 serves as a coordination point for ATP. Glutamate 173 is a binding site for Mg(2+). Deamido-NAD(+)-binding residues include lysine 181 and aspartate 188. ATP contacts are provided by lysine 197 and threonine 219. Residue 268–269 (HK) coordinates deamido-NAD(+).

This sequence belongs to the NAD synthetase family. In terms of assembly, homodimer.

It catalyses the reaction deamido-NAD(+) + NH4(+) + ATP = AMP + diphosphate + NAD(+) + H(+). The protein operates within cofactor biosynthesis; NAD(+) biosynthesis; NAD(+) from deamido-NAD(+) (ammonia route): step 1/1. In terms of biological role, catalyzes the ATP-dependent amidation of deamido-NAD to form NAD. Uses ammonia as a nitrogen source. This Streptomyces coelicolor (strain ATCC BAA-471 / A3(2) / M145) protein is NH(3)-dependent NAD(+) synthetase.